The chain runs to 259 residues: MMTDARTTAEGGMETSYGFHKVDEGKKQGLVNEVFHKVAKRYDIMNDVMSAGLHRLWKDAMVSALSPRKDPSYKILDVAGGTGDVAFRIIEASNRLAHATVLDINGSMLAVGEERAAKKKLSDNLTFVEANAEELPFEANTFDAYTVAFGIRNVPRIDVALKEAYRVLKRGGRLLVLEFSEVDMPLLDRVYDAWSFNAIPQFGKMITGDAEPYQYLVESIRKFPNQEDFATMIRTAGFSRVTYTNYTGGIAALHSGWKL.

S-adenosyl-L-methionine-binding positions include Thr82, Asp103, and 131-132 (NA).

The protein belongs to the class I-like SAM-binding methyltransferase superfamily. MenG/UbiE family.

It catalyses the reaction a 2-demethylmenaquinol + S-adenosyl-L-methionine = a menaquinol + S-adenosyl-L-homocysteine + H(+). The enzyme catalyses a 2-methoxy-6-(all-trans-polyprenyl)benzene-1,4-diol + S-adenosyl-L-methionine = a 5-methoxy-2-methyl-3-(all-trans-polyprenyl)benzene-1,4-diol + S-adenosyl-L-homocysteine + H(+). The protein operates within quinol/quinone metabolism; menaquinone biosynthesis; menaquinol from 1,4-dihydroxy-2-naphthoate: step 2/2. It participates in cofactor biosynthesis; ubiquinone biosynthesis. Functionally, methyltransferase required for the conversion of demethylmenaquinol (DMKH2) to menaquinol (MKH2) and the conversion of 2-polyprenyl-6-methoxy-1,4-benzoquinol (DDMQH2) to 2-polyprenyl-3-methyl-6-methoxy-1,4-benzoquinol (DMQH2). The protein is Ubiquinone/menaquinone biosynthesis C-methyltransferase UbiE of Agrobacterium fabrum (strain C58 / ATCC 33970) (Agrobacterium tumefaciens (strain C58)).